The following is a 230-amino-acid chain: Sugar fermentation stimulation protein homolog (230 aa).

The protein belongs to the SfsA family.

The chain is Sugar fermentation stimulation protein homolog from Clostridium perfringens (strain 13 / Type A).